A 134-amino-acid polypeptide reads, in one-letter code: Large ribosomal subunit protein uL16c (134 aa).

The protein belongs to the universal ribosomal protein uL16 family. In terms of assembly, part of the 50S ribosomal subunit.

The protein resides in the plastid. Its subcellular location is the chloroplast. In Solanum lycopersicum (Tomato), this protein is Large ribosomal subunit protein uL16c.